The following is a 442-amino-acid chain: Putative arsenical pump membrane protein (442 aa).

Transmembrane regions (helical) follow at residues 22 to 42 (IPAT…LADL), 56 to 76 (ILAT…YWVA), 85 to 105 (GSGI…TIFL), 107 to 127 (NDGS…YLGL), 136 to 156 (LLSG…SNIV), 174 to 194 (MMFV…FMFF), 250 to 270 (LFAA…GSFI), 294 to 314 (IFIF…IGFT), 328 to 347 (SLAH…SNLF), 378 to 398 (IIGS…TLIW), and 419 to 439 (IIII…WISW).

This sequence belongs to the ArsB family.

Its subcellular location is the cell membrane. This Bacillus subtilis (strain 168) protein is Putative arsenical pump membrane protein (ywrK).